A 123-amino-acid chain; its full sequence is Large ribosomal subunit protein bL17 (123 aa).

Belongs to the bacterial ribosomal protein bL17 family. In terms of assembly, part of the 50S ribosomal subunit. Contacts protein L32.

This Borrelia garinii subsp. bavariensis (strain ATCC BAA-2496 / DSM 23469 / PBi) (Borreliella bavariensis) protein is Large ribosomal subunit protein bL17.